We begin with the raw amino-acid sequence, 436 residues long: Trigger factor (436 aa).

The PPIase FKBP-type domain occupies 163-248 (GDRVTVDFEG…LKKIEAAHLP (86 aa)).

This sequence belongs to the FKBP-type PPIase family. Tig subfamily.

It is found in the cytoplasm. It carries out the reaction [protein]-peptidylproline (omega=180) = [protein]-peptidylproline (omega=0). Its function is as follows. Involved in protein export. Acts as a chaperone by maintaining the newly synthesized protein in an open conformation. Functions as a peptidyl-prolyl cis-trans isomerase. This is Trigger factor from Albidiferax ferrireducens (strain ATCC BAA-621 / DSM 15236 / T118) (Rhodoferax ferrireducens).